Consider the following 315-residue polypeptide: uncharacterized protein (315 aa).

This is an uncharacterized protein from Bos taurus (Bovine).